Here is a 137-residue protein sequence, read N- to C-terminus: Large ribosomal subunit protein uL16 (137 aa).

The protein belongs to the universal ribosomal protein uL16 family. Part of the 50S ribosomal subunit.

Its function is as follows. Binds 23S rRNA and is also seen to make contacts with the A and possibly P site tRNAs. In Azorhizobium caulinodans (strain ATCC 43989 / DSM 5975 / JCM 20966 / LMG 6465 / NBRC 14845 / NCIMB 13405 / ORS 571), this protein is Large ribosomal subunit protein uL16.